We begin with the raw amino-acid sequence, 360 residues long: Phospho-N-acetylmuramoyl-pentapeptide-transferase (360 aa).

10 consecutive transmembrane segments (helical) span residues 16 to 36, 73 to 93, 97 to 117, 134 to 154, 168 to 188, 199 to 219, 236 to 256, 263 to 283, 288 to 308, and 338 to 358; these read FAVF…ALVL, TMGG…WADL, YVWV…VDDY, YFWQ…TAST, YSIP…VGSS, GLAI…CYLS, AGEL…FLWF, VFMG…IAVI, IVLF…VIQV, and VIVR…ATLK.

This sequence belongs to the glycosyltransferase 4 family. MraY subfamily. It depends on Mg(2+) as a cofactor.

The protein localises to the cell inner membrane. It catalyses the reaction UDP-N-acetyl-alpha-D-muramoyl-L-alanyl-gamma-D-glutamyl-meso-2,6-diaminopimeloyl-D-alanyl-D-alanine + di-trans,octa-cis-undecaprenyl phosphate = di-trans,octa-cis-undecaprenyl diphospho-N-acetyl-alpha-D-muramoyl-L-alanyl-D-glutamyl-meso-2,6-diaminopimeloyl-D-alanyl-D-alanine + UMP. It participates in cell wall biogenesis; peptidoglycan biosynthesis. In terms of biological role, catalyzes the initial step of the lipid cycle reactions in the biosynthesis of the cell wall peptidoglycan: transfers peptidoglycan precursor phospho-MurNAc-pentapeptide from UDP-MurNAc-pentapeptide onto the lipid carrier undecaprenyl phosphate, yielding undecaprenyl-pyrophosphoryl-MurNAc-pentapeptide, known as lipid I. This chain is Phospho-N-acetylmuramoyl-pentapeptide-transferase, found in Pseudomonas fluorescens (strain Pf0-1).